The chain runs to 105 residues: uncharacterized protein (105 aa).

The interval 1–27 (MQSPAMKRIKSSSHSRWDGSGSVNEMP) is disordered.

It localises to the mitochondrion. This is an uncharacterized protein from Arabidopsis thaliana (Mouse-ear cress).